The sequence spans 529 residues: Cytokinin dehydrogenase 4 (529 aa).

A signal peptide spans Met-1–His-27. The region spanning Cys-63 to Ala-244 is the FAD-binding PCMH-type domain. 3 residues coordinate FAD: Ala-99, Gly-101, and Gly-103. Position 104 is a pros-8alpha-FAD histidine (His-104). FAD is bound by residues Ser-105, Gln-109, Asp-168, Thr-173, Ser-179, Val-183, and Ile-234. 3 N-linked (GlcNAc...) asparagine glycosylation sites follow: Asn-285, Asn-419, and Asn-425. 2 residues coordinate FAD: Tyr-479 and Gln-517.

This sequence belongs to the oxygen-dependent FAD-linked oxidoreductase family. As to quaternary structure, monomer. It depends on FAD as a cofactor. Expressed in inflorescence meristems.

It localises to the secreted. The protein resides in the extracellular space. It catalyses the reaction N(6)-dimethylallyladenine + A + H2O = 3-methyl-2-butenal + adenine + AH2. Catalyzes the oxidation of cytokinins, a family of N(6)-substituted adenine derivatives that are plant hormones, where the substituent is an isopentenyl group. The protein is Cytokinin dehydrogenase 4 (CKX4) of Oryza sativa subsp. japonica (Rice).